Reading from the N-terminus, the 695-residue chain is Elongation factor G (695 aa).

One can recognise a tr-type G domain in the interval 9 to 283 (EKIRNIGIVA…AVIDYLPSPL (275 aa)). Residues 18–25 (AHIDAGKT), 82–86 (DTPGH), and 136–139 (NKMD) contribute to the GTP site.

The protein belongs to the TRAFAC class translation factor GTPase superfamily. Classic translation factor GTPase family. EF-G/EF-2 subfamily.

It localises to the cytoplasm. Its function is as follows. Catalyzes the GTP-dependent ribosomal translocation step during translation elongation. During this step, the ribosome changes from the pre-translocational (PRE) to the post-translocational (POST) state as the newly formed A-site-bound peptidyl-tRNA and P-site-bound deacylated tRNA move to the P and E sites, respectively. Catalyzes the coordinated movement of the two tRNA molecules, the mRNA and conformational changes in the ribosome. The chain is Elongation factor G from Petrotoga mobilis (strain DSM 10674 / SJ95).